Here is a 342-residue protein sequence, read N- to C-terminus: UDP-3-O-acylglucosamine N-acyltransferase (342 aa).

The active-site Proton acceptor is the His-238.

Belongs to the transferase hexapeptide repeat family. LpxD subfamily. As to quaternary structure, homotrimer.

The catalysed reaction is a UDP-3-O-[(3R)-3-hydroxyacyl]-alpha-D-glucosamine + a (3R)-hydroxyacyl-[ACP] = a UDP-2-N,3-O-bis[(3R)-3-hydroxyacyl]-alpha-D-glucosamine + holo-[ACP] + H(+). It functions in the pathway bacterial outer membrane biogenesis; LPS lipid A biosynthesis. Its function is as follows. Catalyzes the N-acylation of UDP-3-O-acylglucosamine using 3-hydroxyacyl-ACP as the acyl donor. Is involved in the biosynthesis of lipid A, a phosphorylated glycolipid that anchors the lipopolysaccharide to the outer membrane of the cell. The sequence is that of UDP-3-O-acylglucosamine N-acyltransferase from Tolumonas auensis (strain DSM 9187 / NBRC 110442 / TA 4).